We begin with the raw amino-acid sequence, 275 residues long: Translation initiation factor 2 subunit alpha (275 aa).

The 72-residue stretch at 12–83 (GEFVVATVKR…RKGHIDLSLR (72 aa)) folds into the S1 motif domain.

The protein belongs to the eIF-2-alpha family. As to quaternary structure, heterotrimer composed of an alpha, a beta and a gamma chain.

In terms of biological role, eIF-2 functions in the early steps of protein synthesis by forming a ternary complex with GTP and initiator tRNA. This Pyrococcus horikoshii (strain ATCC 700860 / DSM 12428 / JCM 9974 / NBRC 100139 / OT-3) protein is Translation initiation factor 2 subunit alpha (eif2a).